A 67-amino-acid chain; its full sequence is ATP synthase subunit c (67 aa).

A run of 2 helical transmembrane segments spans residues 6-26 (ILALGIAVLGVSLGEGILVAN) and 46-66 (IMGVAFIEGTFFVLLASTFFV).

It belongs to the ATPase C chain family. In terms of assembly, F-type ATPases have 2 components, F(1) - the catalytic core - and F(0) - the membrane proton channel. F(1) has five subunits: alpha(3), beta(3), gamma(1), delta(1), epsilon(1). F(0) has three main subunits: a(1), b(2) and c(10-14). The alpha and beta chains form an alternating ring which encloses part of the gamma chain. F(1) is attached to F(0) by a central stalk formed by the gamma and epsilon chains, while a peripheral stalk is formed by the delta and b chains.

The protein localises to the cell membrane. In terms of biological role, f(1)F(0) ATP synthase produces ATP from ADP in the presence of a proton or sodium gradient. F-type ATPases consist of two structural domains, F(1) containing the extramembraneous catalytic core and F(0) containing the membrane proton channel, linked together by a central stalk and a peripheral stalk. During catalysis, ATP synthesis in the catalytic domain of F(1) is coupled via a rotary mechanism of the central stalk subunits to proton translocation. Key component of the F(0) channel; it plays a direct role in translocation across the membrane. A homomeric c-ring of between 10-14 subunits forms the central stalk rotor element with the F(1) delta and epsilon subunits. The polypeptide is ATP synthase subunit c (Streptococcus mutans serotype c (strain ATCC 700610 / UA159)).